We begin with the raw amino-acid sequence, 116 residues long: Iron-sulfur cluster assembly protein CyaY (116 aa).

Belongs to the frataxin family.

In terms of biological role, involved in iron-sulfur (Fe-S) cluster assembly. May act as a regulator of Fe-S biogenesis. The polypeptide is Iron-sulfur cluster assembly protein CyaY (Polaromonas sp. (strain JS666 / ATCC BAA-500)).